The chain runs to 735 residues: E3 ubiquitin-protein ligase SH3RF2 (735 aa).

The RING-type zinc finger occupies 12-53 (CPVCFEKLDVTAKVLPCQHTFCKPCLQRIFKAHKELRCPECR). 2 SH3 domains span residues 125-184 (DGVP…VIKQ) and 187-252 (QPPP…PNLS). 2 disordered regions span residues 260–301 (SKGH…GSGQ) and 335–373 (TSPSMLTQHGDRADFPASSAGQVSTSHPAPASPGHSTAM). Residues 273-289 (LMSSPSRGKATNTSTLR) show a composition bias toward polar residues. The segment at 373 to 466 (MVSVPSSQQH…RHPTVCTTWA (94 aa)) is interaction with PAK4. An SH3 3 domain is found at 383 to 444 (LSTNMFVALH…PSDYVIPVFS (62 aa)). 3 disordered regions span residues 472–534 (VSSQ…PVQS), 612–637 (ETPIKSEPPPKPPASAPPSILVKPEN), and 649–735 (VRFQ…FPSK). Residues 523–534 (RKNGSLQRPVQS) are compositionally biased toward polar residues. Residues 617-627 (SEPPPKPPASA) are compositionally biased toward pro residues. Positions 647–652 (KTVRFQ) are interaction with PPP1CA. The residue at position 655 (Ser655) is a Phosphoserine. The segment covering 715–735 (FSKTTPPVSTASVSQTLFPSK) has biased composition (polar residues).

Belongs to the SH3RF family. Interacts with FASLG and PPP1CA. Interacts with PAK4 and TNFRSF1A. Interacts with DLK1, MAP3K10, MAPK8IP1/JIP1, MAPK8IP2/JIP2 and MAPK8IP3/JIP3. Interacts with RAC1 (both active GTP- or inactive GDP-bound forms). Autoubiquitinated.

The protein resides in the nucleus. The enzyme catalyses S-ubiquitinyl-[E2 ubiquitin-conjugating enzyme]-L-cysteine + [acceptor protein]-L-lysine = [E2 ubiquitin-conjugating enzyme]-L-cysteine + N(6)-ubiquitinyl-[acceptor protein]-L-lysine.. It functions in the pathway protein modification; protein ubiquitination. Functionally, has E3 ubiquitin-protein ligase activity. Acts as an anti-apoptotic regulator of the JNK pathway by ubiquitinating and promoting the degradation of SH3RF1, a scaffold protein that is required for pro-apoptotic JNK activation. Facilitates TNF-alpha-mediated recruitment of adapter proteins TRADD and RIPK1 to TNFRSF1A and regulates PAK4 protein stability via inhibition of its ubiquitin-mediated proteasomal degradation. Inhibits PPP1CA phosphatase activity. This chain is E3 ubiquitin-protein ligase SH3RF2 (Sh3rf2), found in Rattus norvegicus (Rat).